The chain runs to 123 residues: Putative iron-sulfur cluster insertion protein ErpA (123 aa).

Iron-sulfur cluster-binding residues include Cys51, Cys115, and Cys117.

The protein belongs to the HesB/IscA family. In terms of assembly, homodimer. Requires iron-sulfur cluster as cofactor.

Required for insertion of 4Fe-4S clusters. The sequence is that of Putative iron-sulfur cluster insertion protein ErpA from Bordetella avium (strain 197N).